We begin with the raw amino-acid sequence, 757 residues long: Cartilage oligomeric matrix protein (757 aa).

A signal peptide spans 1-20 (MVPDTACVLLLTLAALGASG). The interval 22-86 (GQSPLGSDLG…SVRTGLPSVR (65 aa)) is COMP N-terminal. Positions 87–126 (PLLHCAPGFCFPGVACIQTESGARCGPCPAGFTGNGSHCT) constitute an EGF-like 1 domain. 21 cysteine pairs are disulfide-bonded: Cys91/Cys102, Cys96/Cys111, Cys114/Cys125, Cys131/Cys142, Cys136/Cys151, Cys154/Cys178, Cys184/Cys197, Cys191/Cys206, Cys209/Cys221, Cys229/Cys243, Cys237/Cys253, Cys255/Cys266, Cys282/Cys287, Cys292/Cys312, Cys328/Cys348, Cys351/Cys371, Cys387/Cys407, Cys410/Cys430, Cys448/Cys468, Cys484/Cys504, and Cys520/Cys741. Residue Asn121 is glycosylated (N-linked (GlcNAc...) asparagine). Residues 127-179 (DVNECNAHPCFPRVRCINTSPGFRCEACPPGYSGPTHQGVGLAFAKANKQVCT) form the EGF-like 2; calcium-binding domain. The EGF-like 3; calcium-binding domain maps to 180 to 222 (DINECETGQHNCVPNSVCINTRGSFQCGPCQPGFVGDQASGCQ). Residues 225 to 267 (AQRFCPDGSPSECHEHADCVLERDGSRSCVCAVGWAGNGILCG) enclose the EGF-like 4 domain. TSP type-3 repeat units lie at residues 268-300 (RDTDLDGFPDEKLRCPERQCRKDNCVTVPNSGQ), 301-336 (EDVDRDGIGDACDPDADGDGVPNEKDNCPLVRNPDQ), 337-359 (RNTDEDKWGDACDNCRSQKNDDQ), 360-395 (KDTDQDGRGDACDDDIDGDRIRNQADNCPRVPNSDQ), 396-418 (KDSDGDGIGDACDNCPQKSNPDQ), 419-456 (ADVDHDFVGDACDSDQDQDGDGHQDSRDNCPTVPNSAQ), 457-492 (EDSDHDGQGDACDDDDDNDGVPDSRDNCRLVPNPGQ), and 493-528 (EDADRDGVGDVCQDDFDADKVVDKIDVCPENAEVTL). Residues 298 to 503 (SGQEDVDRDG…DADRDGVGDV (206 aa)) form a disordered region. 2 stretches are compositionally biased toward basic and acidic residues: residues 334–346 (PDQRNTDEDKWGD) and 352–370 (RSQKNDDQKDTDQDGRGDA). A Cell attachment site motif is present at residues 367–369 (RGD). The span at 467-476 (ACDDDDDNDG) shows a compositional bias: acidic residues. The tract at residues 527 to 757 (TLTDFRAFQT…DYETHQLRQA (231 aa)) is mediates cell survival and induction of the IAP family of survival proteins. In terms of domain architecture, TSP C-terminal spans 532 to 746 (RAFQTVVLDP…LRYRCNDTIP (215 aa)). A glycan (N-linked (GlcNAc...) asparagine) is linked at Asn742.

The protein belongs to the thrombospondin family. Pentamer; disulfide-linked. Exists in a more compact conformation in the presence of calcium and shows a more extended conformation in the absence of calcium. Interacts with ITGB3, ITGA5 and FN1. Binding to FN1 requires the presence of divalent cations (Ca(2+), Mg(2+) or Mn(2+)). The greatest amount of binding is seen in the presence of Mn(2+). Interacts with MATN1, MATN3, MATN4 and ACAN. Binds heparin, heparan sulfate and chondroitin sulfate. EDTA dimishes significantly its binding to ACAN and abolishes its binding to MATN3, MATN4 and chondroitin sulfate. Interacts with collagen I, II and IX, and interaction with these collagens is dependent on the presence of zinc ions. Interacts with ADAMTS12. Interacts with ITGA7. Ca(2+) is required as a cofactor. Post-translationally, proteolytically cleaved by metalloproteases ADAMTS4 and ADAMTS1 with ADAMTS4 showing more potent activity. As to expression, abundantly expressed in the chondrocyte extracellular matrix, and is also found in bone, tendon, ligament and synovium and blood vessels. Increased amounts are produced during late stages of osteoarthritis in the area adjacent to the main defect.

It is found in the secreted. Its subcellular location is the extracellular space. The protein localises to the extracellular matrix. Functionally, plays a role in the structural integrity of cartilage via its interaction with other extracellular matrix proteins such as the collagens and fibronectin. Can mediate the interaction of chondrocytes with the cartilage extracellular matrix through interaction with cell surface integrin receptors. Could play a role in the pathogenesis of osteoarthritis. Potent suppressor of apoptosis in both primary chondrocytes and transformed cells. Suppresses apoptosis by blocking the activation of caspase-3 and by inducing the IAP family of survival proteins (BIRC3, BIRC2, BIRC5 and XIAP). Essential for maintaining a vascular smooth muscle cells (VSMCs) contractile/differentiated phenotype under physiological and pathological stimuli. Maintains this phenotype of VSMCs by interacting with ITGA7. This Homo sapiens (Human) protein is Cartilage oligomeric matrix protein.